The primary structure comprises 88 residues: Cell division topological specificity factor (88 aa).

The protein belongs to the MinE family.

Functionally, prevents the cell division inhibition by proteins MinC and MinD at internal division sites while permitting inhibition at polar sites. This ensures cell division at the proper site by restricting the formation of a division septum at the midpoint of the long axis of the cell. The protein is Cell division topological specificity factor of Acidovorax ebreus (strain TPSY) (Diaphorobacter sp. (strain TPSY)).